The chain runs to 405 residues: S-adenosylmethionine synthase (405 aa).

His22 contacts ATP. Residue Asp24 participates in Mg(2+) binding. K(+) is bound at residue Glu50. Positions 63 and 107 each coordinate L-methionine. The tract at residues 107–117 is flexible loop; sequence QSPDIAQGVNR. Residues 184-186, 250-251, Asp259, 265-266, Ala282, and Lys286 contribute to the ATP site; these read DGK, RF, and RK. Asp259 is an L-methionine binding site. Lys290 serves as a coordination point for L-methionine.

This sequence belongs to the AdoMet synthase family. As to quaternary structure, homotetramer; dimer of dimers. Requires Mg(2+) as cofactor. It depends on K(+) as a cofactor.

It localises to the cytoplasm. The catalysed reaction is L-methionine + ATP + H2O = S-adenosyl-L-methionine + phosphate + diphosphate. Its pathway is amino-acid biosynthesis; S-adenosyl-L-methionine biosynthesis; S-adenosyl-L-methionine from L-methionine: step 1/1. Catalyzes the formation of S-adenosylmethionine (AdoMet) from methionine and ATP. The overall synthetic reaction is composed of two sequential steps, AdoMet formation and the subsequent tripolyphosphate hydrolysis which occurs prior to release of AdoMet from the enzyme. The protein is S-adenosylmethionine synthase of Roseiflexus castenholzii (strain DSM 13941 / HLO8).